The primary structure comprises 782 residues: Acetazolamide conferring resistance protein zam (782 aa).

Residues 270–579 enclose the RNB domain; it reads EVALSLESQA…QRLLKLVLTE (310 aa). The 82-residue stretch at 655–736 folds into the S1 motif domain; the sequence is GEIFRGLITG…YRQQIDLGAV (82 aa). The tract at residues 737-782 is disordered; that stretch reads NNAPKDSANMDFDDDDEDGDEREEQDTMDWDAMEDGDDDEGGAVIF. A compositionally biased stretch (acidic residues) spans 747-782; it reads DFDDDDEDGDEREEQDTMDWDAMEDGDDDEGGAVIF.

Belongs to the RNR ribonuclease family.

Its function is as follows. Not known; control resistance to the carbonic anhydrase inhibitor acetazolamide. This is Acetazolamide conferring resistance protein zam (zam) from Synechocystis sp. (strain ATCC 27184 / PCC 6803 / Kazusa).